We begin with the raw amino-acid sequence, 274 residues long: Diaminopimelate epimerase (274 aa).

Substrate is bound by residues Asn11, Gln44, and Asn64. Residue Cys73 is the Proton donor of the active site. Substrate contacts are provided by residues 74 to 75 (GN), Asn157, Asn190, and 208 to 209 (ER). Residue Cys217 is the Proton acceptor of the active site. 218–219 (GS) is a binding site for substrate.

It belongs to the diaminopimelate epimerase family. As to quaternary structure, homodimer.

The protein resides in the cytoplasm. The enzyme catalyses (2S,6S)-2,6-diaminopimelate = meso-2,6-diaminopimelate. It participates in amino-acid biosynthesis; L-lysine biosynthesis via DAP pathway; DL-2,6-diaminopimelate from LL-2,6-diaminopimelate: step 1/1. In terms of biological role, catalyzes the stereoinversion of LL-2,6-diaminopimelate (L,L-DAP) to meso-diaminopimelate (meso-DAP), a precursor of L-lysine and an essential component of the bacterial peptidoglycan. This Enterobacter sp. (strain 638) protein is Diaminopimelate epimerase.